Reading from the N-terminus, the 515-residue chain is GMP synthase [glutamine-hydrolyzing] (515 aa).

Positions 10–200 constitute a Glutamine amidotransferase type-1 domain; it reads TIIVLDFGSQ…VFGVCGCSEG (191 aa). Cys-87 (nucleophile) is an active-site residue. Catalysis depends on residues His-174 and Glu-176. One can recognise a GMPS ATP-PPase domain in the interval 201–390; that stretch reads WNMENFIEVE…LGIPDEIVWR (190 aa). Position 228 to 234 (228 to 234) interacts with ATP; it reads SGGVDSS.

As to quaternary structure, homodimer.

The catalysed reaction is XMP + L-glutamine + ATP + H2O = GMP + L-glutamate + AMP + diphosphate + 2 H(+). Its pathway is purine metabolism; GMP biosynthesis; GMP from XMP (L-Gln route): step 1/1. Catalyzes the synthesis of GMP from XMP. The polypeptide is GMP synthase [glutamine-hydrolyzing] (Bacillus cereus (strain ATCC 14579 / DSM 31 / CCUG 7414 / JCM 2152 / NBRC 15305 / NCIMB 9373 / NCTC 2599 / NRRL B-3711)).